The following is a 1170-amino-acid chain: Short transient receptor potential channel 2 (1170 aa).

Topologically, residues 1–627 are cytoplasmic; the sequence is MLMSLTDSKE…GWRGSTTIWK (627 aa). Disordered regions lie at residues 64–113, 142–231, and 322–342; these read SLSD…QTST, AHKA…QATG, and ESGS…VEES. Positions 74–85 are enriched in polar residues; that stretch reads SPGSSGLNQNSS. Residues 158–177 show a composition bias toward basic and acidic residues; it reads GEPDSSHPERAEPRAEEPNR. ANK repeat units follow at residues 300–329, 346–376, 377–405, and 429–458; these read KFPP…DPSG, SWRE…DFRQ, IHEA…REKG, and PGVT…TIAR. A helical transmembrane segment spans residues 628-648; the sequence is LFVAFLIFLTMPFLCIGYWLA. The Extracellular segment spans residues 649–658; it reads PKSRLGRLLK. A helical transmembrane segment spans residues 659–679; the sequence is IPVLKFLLHSASYLWFLIFLL. The Cytoplasmic portion of the chain corresponds to 680 to 701; it reads GESLVMETQLSTFKGRSQSVWE. The chain crosses the membrane as a helical span at residues 702–722; the sequence is TSLHMIWVTGFLWFECKEVWI. The Extracellular segment spans residues 723–737; that stretch reads EGLRSYLLDWWNFLD. The chain crosses the membrane as a helical span at residues 738-758; the sequence is VVILSLYLASFALRLLLAGLA. The Cytoplasmic segment spans residues 759–788; it reads YMHCRDASDSSTCRYFTTAERSEWRTEDPQ. The chain crosses the membrane as a helical span at residues 789 to 809; that stretch reads FLAEVLFAVTSMLSFTRLAYI. At 810–832 the chain is on the extracellular side; the sequence is LPAHESLGTLQISIGKMIDDMIR. The helical transmembrane segment at 833–853 threads the bilayer; sequence FMFILMIILTAFLCGLNNIYV. The Cytoplasmic portion of the chain corresponds to 854-898; the sequence is PYQETEKLGNFNETFQFLFWTMFGMEEHSVVDMPQFLVPEFVGRA. A helical transmembrane segment spans residues 899–919; the sequence is MYGIFTIVMVIVLLNMLIAMI. The Extracellular segment spans residues 920–1170; that stretch reads TNSFQKIEDD…GEDLETKGES (251 aa). Residues 1030–1068 are a coiled coil; it reads RREFEETRRKDLGNRLTELTKTVSRLQSEVASVQKTVAA. The interval 1118–1170 is disordered; it reads LEDSLDATGEAGTPASGESSSSSSAHVLVHREQEAEGAGDLPLGEDLETKGES.

It belongs to the transient receptor (TC 1.A.4) family. STrpC subfamily. TRPC2 sub-subfamily. Expressed exclusively in vomeronasal organ neurons (sensory microvilli).

It localises to the membrane. Thought to form a receptor-activated calcium permeant cation channel. Probably is operated by a phosphatidylinositol second messenger system activated by receptor tyrosine kinases or G-protein coupled receptors. Is not activated by intracellular calcium store depletion. The polypeptide is Short transient receptor potential channel 2 (Trpc2) (Rattus norvegicus (Rat)).